The sequence spans 137 residues: Large ribosomal subunit protein bL17 (137 aa).

It belongs to the bacterial ribosomal protein bL17 family. Part of the 50S ribosomal subunit. Contacts protein L32.

This chain is Large ribosomal subunit protein bL17, found in Bradyrhizobium sp. (strain ORS 278).